The following is a 376-amino-acid chain: 23S rRNA (uracil(747)-C(5))-methyltransferase RlmC (376 aa).

4 residues coordinate [4Fe-4S] cluster: cysteine 3, cysteine 11, cysteine 14, and cysteine 87. Positions 212, 241, 262, and 307 each coordinate S-adenosyl-L-methionine. Residue cysteine 334 is the Nucleophile of the active site.

Belongs to the class I-like SAM-binding methyltransferase superfamily. RNA M5U methyltransferase family. RlmC subfamily.

The catalysed reaction is uridine(747) in 23S rRNA + S-adenosyl-L-methionine = 5-methyluridine(747) in 23S rRNA + S-adenosyl-L-homocysteine + H(+). Its function is as follows. Catalyzes the formation of 5-methyl-uridine at position 747 (m5U747) in 23S rRNA. The chain is 23S rRNA (uracil(747)-C(5))-methyltransferase RlmC from Salmonella typhimurium (strain LT2 / SGSC1412 / ATCC 700720).